The sequence spans 435 residues: Nucleoredoxin (435 aa).

Position 2 is an N-acetylserine (serine 2). One can recognise a Thioredoxin domain in the interval 167–321 (PKPFREVIAG…VLELSDSNAV (155 aa)).

It belongs to the nucleoredoxin family. As to quaternary structure, associates with the phosphatase 2A holoenzyme. Interacts with PPP2CA; the interaction is direct. Interacts with DVL1 (via PDZ domain); the interaction is direct and regulated by oxidative stress.

The protein localises to the cytoplasm. Its subcellular location is the cytosol. It localises to the nucleus. It catalyses the reaction [protein]-dithiol + NAD(+) = [protein]-disulfide + NADH + H(+). The enzyme catalyses [protein]-dithiol + NADP(+) = [protein]-disulfide + NADPH + H(+). Functions as a redox-dependent negative regulator of the Wnt signaling pathway, possibly by preventing ubiquitination of DVL3 by the BCR(KLHL12) complex. May also function as a transcriptional regulator act as a regulator of protein phosphatase 2A (PP2A). This is Nucleoredoxin (NXN) from Bos taurus (Bovine).